The sequence spans 444 residues: MTTEGGPPPAPLRRACSPVPGALQAALMSPPPAAAAAAAAAPETTSSSSSSSSASCASSSSSSNSASAPSAACKSAGGGGAGAGSGGAKKASSGLRRPEKPPYSYIALIVMAIQSSPSKRLTLSEIYQFLQARFPFFRGAYQGWKNSVRHNLSLNECFIKLPKGLGRPGKGHYWTIDPASEFMFEEGSFRRRPRGFRRKCQALKPMYHRVVSGLGFGASLLPQGFDFQAPPSAPLGCHSQGGYGGLDMMPAGYDAGAGAPSHAHPHHHHHHHVPHMSPNPGSTYMASCPVPAGPGGVGAAGGGGGGDYGPDSSSSPVPSSPAMASAIECHSPYTSPAAHWSSPGASPYLKQPPALTPSSNPAASAGLHSSMSSYSLEQSYLHQNAREDLSVGLPRYQHHSTPVCDRKDFVLNFNGISSFHPSASGSYYHHHHQSVCQDIKPCVM.

The interval 32–98 is disordered; that stretch reads PAAAAAAAAA…KKASSGLRRP (67 aa). Low complexity predominate over residues 34–75; sequence AAAAAAAAPETTSSSSSSSSASCASSSSSSNSASAPSAACKS. Positions 76-87 are enriched in gly residues; sequence AGGGGAGAGSGG. Positions 99 to 190 form a DNA-binding region, fork-head; it reads EKPPYSYIAL…EFMFEEGSFR (92 aa). 2 disordered regions span residues 256 to 323 and 338 to 367; these read GAGA…SPAM and AHWS…SAGL. Basic residues predominate over residues 263 to 274; the sequence is AHPHHHHHHHVP. A compositionally biased stretch (gly residues) spans 293–308; that stretch reads GPGGVGAAGGGGGGDY. Low complexity predominate over residues 309–323; the sequence is GPDSSSSPVPSSPAM.

Interacts with the transcription factors TBP and TFIIB. In terms of tissue distribution, lung and placenta. Predominantly expressed in gastrointestinal tract including stomach.

It is found in the nucleus. In terms of biological role, probable transcription activator for a number of lung-specific genes. Mediates up-regulation of the E3 ligase IRF2BPL and drives ubiquitination and degradation of CTNNB1. This is Forkhead box protein F2 (FOXF2) from Homo sapiens (Human).